Consider the following 219-residue polypeptide: Mucosal pentraxin (219 aa).

An N-terminal signal peptide occupies residues 1–19; that stretch reads MEKLIVGILFLSVLSGSVA. The Pentraxin (PTX) domain maps to 24–219; that stretch reads KGKAFIFPQE…YVVIKPKLWP (196 aa). N51 is a glycosylation site (N-linked (GlcNAc...) asparagine). The cysteines at positions 55 and 114 are disulfide-linked. 6 residues coordinate Ca(2+): D77, N78, E155, Q156, D157, and Q167.

It belongs to the pentraxin family. Homopentamer. Pentraxin (or pentaxin) have a discoid arrangement of 5 non-covalently bound subunits. Requires Ca(2+) as cofactor. In terms of tissue distribution, expressed in colon.

The protein resides in the secreted. This is Mucosal pentraxin (Mptx1) from Mus musculus (Mouse).